Reading from the N-terminus, the 573-residue chain is Probable CoA ligase CCL13 (573 aa).

Residues 216-224 (TSGTTARPK), 352-357 (HIYGLT), Asp449, 461-464 (LKDR), and Lys556 each bind ATP. Residues 284–352 (SPKAIFDNIH…MEEMGFQVNH (69 aa)) form an SBD1 region. The tract at residues 353 to 429 (IYGLTETHGP…FRGNTVMSGY (77 aa)) is SBD2.

The protein belongs to the ATP-dependent AMP-binding enzyme family.

It is found in the cytoplasm. Its subcellular location is the cytosol. In Humulus lupulus (European hop), this protein is Probable CoA ligase CCL13.